Consider the following 135-residue polypeptide: Ribosome-binding factor A (135 aa).

This sequence belongs to the RbfA family. In terms of assembly, monomer. Binds 30S ribosomal subunits, but not 50S ribosomal subunits or 70S ribosomes.

Its subcellular location is the cytoplasm. In terms of biological role, one of several proteins that assist in the late maturation steps of the functional core of the 30S ribosomal subunit. Associates with free 30S ribosomal subunits (but not with 30S subunits that are part of 70S ribosomes or polysomes). Required for efficient processing of 16S rRNA. May interact with the 5'-terminal helix region of 16S rRNA. This is Ribosome-binding factor A from Hyphomonas neptunium (strain ATCC 15444).